Consider the following 539-residue polypeptide: DNA damage-binding protein CMR1 (539 aa).

The segment at 22-89 (LNLPTEAKKE…ALKQEDLGGS (68 aa)) is disordered. The segment covering 27-39 (EAKKESVDPEVAP) has biased composition (basic and acidic residues). WD repeat units lie at residues 182 to 223 (VTKE…EPLQ), 226 to 268 (LHHA…DVLD), 316 to 356 (LGEK…TART), 377 to 415 (NSRLSVSSTDWNLAGQIVCNGYDDTINIFNQSDYFLDML), 462 to 505 (GRWV…LAHL), and 508 to 539 (ALMTAVPSALAFHPTQNWIAGGNSSGKMYWWE).

Belongs to the WD repeat DDB2/WDR76 family.

DNA-binding protein that binds to both single- and double-stranded DNA. Binds preferentially to UV-damaged DNA. May be involved in DNA-metabolic processes. The polypeptide is DNA damage-binding protein CMR1 (Yarrowia lipolytica (strain CLIB 122 / E 150) (Yeast)).